The chain runs to 393 residues: Acetylornithine aminotransferase 1 (393 aa).

Arginine 131 serves as a coordination point for N(2)-acetyl-L-ornithine. 215 to 218 provides a ligand contact to pyridoxal 5'-phosphate; sequence DEVQ. Lysine 244 bears the N6-(pyridoxal phosphate)lysine mark. Residue threonine 272 participates in N(2)-acetyl-L-ornithine binding. Position 273 (threonine 273) interacts with pyridoxal 5'-phosphate.

The protein belongs to the class-III pyridoxal-phosphate-dependent aminotransferase family. ArgD subfamily. In terms of assembly, homodimer. Pyridoxal 5'-phosphate is required as a cofactor.

It is found in the cytoplasm. It catalyses the reaction N(2)-acetyl-L-ornithine + 2-oxoglutarate = N-acetyl-L-glutamate 5-semialdehyde + L-glutamate. Its pathway is amino-acid biosynthesis; L-arginine biosynthesis; N(2)-acetyl-L-ornithine from L-glutamate: step 4/4. The protein is Acetylornithine aminotransferase 1 of Bordetella pertussis (strain Tohama I / ATCC BAA-589 / NCTC 13251).